The following is a 380-amino-acid chain: Chromo domain-containing protein 2 (380 aa).

2 disordered regions span residues 14 to 58 (ISES…SLYG) and 100 to 156 (KLSP…VPLN). Residues 33 to 52 (NSINNKSSTASLESPQNGSW) show a composition bias toward polar residues. Residues 108–119 (EDSEDKKEEDES) show a composition bias toward acidic residues. The span at 121-140 (SYKNEFKSSSSASVSSNFEK) shows a compositional bias: low complexity. The 63-residue stretch at 176 to 238 (FAVEMILDSR…SRGGKPDLSS (63 aa)) folds into the Chromo domain. The disordered stretch occupies residues 250 to 273 (SNEASYVEKDESSNSDDSISYKRR).

Its subcellular location is the nucleus. Functionally, component of the kinetochore which plays a role in stabilizing microtubules and so allowing accurate chromosome segregation. The protein is Chromo domain-containing protein 2 (chp2) of Schizosaccharomyces pombe (strain 972 / ATCC 24843) (Fission yeast).